A 177-amino-acid polypeptide reads, in one-letter code: ATP-dependent protease subunit HslV (177 aa).

Residue threonine 7 is part of the active site. Na(+) is bound by residues glycine 162, cysteine 165, and threonine 168.

It belongs to the peptidase T1B family. HslV subfamily. As to quaternary structure, a double ring-shaped homohexamer of HslV is capped on each side by a ring-shaped HslU homohexamer. The assembly of the HslU/HslV complex is dependent on binding of ATP.

The protein resides in the cytoplasm. The enzyme catalyses ATP-dependent cleavage of peptide bonds with broad specificity.. With respect to regulation, allosterically activated by HslU binding. In terms of biological role, protease subunit of a proteasome-like degradation complex believed to be a general protein degrading machinery. In Persephonella marina (strain DSM 14350 / EX-H1), this protein is ATP-dependent protease subunit HslV.